Here is a 39-residue protein sequence, read N- to C-terminus: uncharacterized protein (39 aa).

Belongs to the orthopoxvirus A30.5 protein family.

This is an uncharacterized protein from Bos taurus (Bovine).